A 1064-amino-acid chain; its full sequence is Ribosome quality control complex subunit NEMF (1064 aa).

Threonine 7 is modified (phosphothreonine). A coiled-coil region spans residues 296-359; that stretch reads VDEFYSKIEG…LIEMNLQIVD (64 aa). Serine 417 carries the phosphoserine modification. The tract at residues 420–451 is disordered; the sequence is EDGDGDASIENSDAEAPKGKKKKQKNKQLQKP. Positions 438 to 447 are enriched in basic residues; it reads GKKKKQKNKQ. Residues 481–512 are a coiled coil; sequence AAKKTQRTVEAAEKAFKSAEKKTKQTLKEVQT. Acidic residues predominate over residues 694–707; sequence EQLEGGDSSEEETE. Disordered stretches follow at residues 694–718 and 731–973; these read EQLEGGDSSEEETEELHGMPGDVEL and SGRD…SLTG. Positions 731 to 756 are enriched in basic and acidic residues; the sequence is SGRDELSSEDGEAKAVTKDQEPIGEM. Serine 737 carries the post-translational modification Phosphoserine. The segment covering 771–781 has biased composition (polar residues); the sequence is IDLSHLQSQRP. Residues 828 to 839 show a composition bias toward basic and acidic residues; the sequence is IEEKDKERESAV. Positions 858–882 form a coiled coil; it reads KRGQKSKMKKMKEKYKDQDDEDREL. Residues 859–870 are compositionally biased toward basic residues; sequence RGQKSKMKKMKE. Over residues 947–959 the composition is skewed to basic and acidic residues; sequence DDPHDDKEEHDLD. The span at 960–973 shows a compositional bias: polar residues; that stretch reads QQGNEENLFDSLTG.

It belongs to the NEMF family. In terms of assembly, component of the ribosome quality control complex (RQC), composed of the E3 ubiquitin ligase LTN1, TCF25 and NEMF associated with the 60S ribosomal subunit. The complex probably also contains VCP/p97 and its ubiquitin-binding cofactors. Interacts (via its N-terminus) with XPO1.

The protein resides in the cytoplasm. The protein localises to the cytosol. Its subcellular location is the nucleus. Its function is as follows. Key component of the ribosome quality control complex (RQC), a ribosome-associated complex that mediates the extraction of incompletely synthesized nascent chains from stalled ribosomes as well as their ubiquitin-mediated proteasomal degradation. Thereby, frees 60S subunit ribosomes from the stalled translation complex and prevents the accumulation of nascent polypeptide chains that are potentially toxic for the cell. Within the RQC complex, NEMF specifically binds stalled 60S ribosomal subunits by recognizing an exposed, nascent chain-conjugated tRNA moiety and promotes the recruitment of LTN1 to stalled 60S subunits. Following binding to stalled 60S ribosomal subunits, NEMF mediates CAT tailing by recruiting alanine-charged tRNA to the A-site and directing the elongation of stalled nascent chains independently of mRNA or 40S subunits, leading to non-templated C-terminal alanine extensions (CAT tails). Mainly recruits alanine-charged tRNAs, but can also other amino acid-charged tRNAs. CAT tailing is required to promote ubiquitination of stalled nascent chains by different E3 ubiquitin-protein ligases. In the canonical RQC pathway (RQC-L), CAT tailing facilitates LTN1-dependent ubiquitination by exposing lysine residues that would otherwise remain buried in the ribosomal exit tunnel. In the alternative RQC pathway (RQC-C) CAT tailing creates an C-degron mainly composed of alanine that is recognized by the CRL2(KLHDC10) and RCHY1/PIRH2 E3 ligases, leading to ubiquitination and degradation of stalled nascent chains. NEMF may also indirectly play a role in nuclear export. This chain is Ribosome quality control complex subunit NEMF, found in Mus musculus (Mouse).